Reading from the N-terminus, the 348-residue chain is Ketol-acid reductoisomerase (NADP(+)) (348 aa).

The KARI N-terminal Rossmann domain maps to 2 to 182; the sequence is AKTYYDHDAD…GCTRAGVLET (181 aa). NADP(+) is bound by residues 25–28, Ser51, Ser53, and 83–86; these read YGSQ and DTAQ. Residue His108 is part of the active site. Gly134 is a binding site for NADP(+). One can recognise a KARI C-terminal knotted domain in the interval 183 to 328; sequence TFKEETETDL…EKLRAAMPFL (146 aa). Mg(2+) contacts are provided by Asp191, Glu195, Glu227, and Glu231. Ser252 contacts substrate.

This sequence belongs to the ketol-acid reductoisomerase family. Requires Mg(2+) as cofactor.

The enzyme catalyses (2R)-2,3-dihydroxy-3-methylbutanoate + NADP(+) = (2S)-2-acetolactate + NADPH + H(+). It carries out the reaction (2R,3R)-2,3-dihydroxy-3-methylpentanoate + NADP(+) = (S)-2-ethyl-2-hydroxy-3-oxobutanoate + NADPH + H(+). It functions in the pathway amino-acid biosynthesis; L-isoleucine biosynthesis; L-isoleucine from 2-oxobutanoate: step 2/4. The protein operates within amino-acid biosynthesis; L-valine biosynthesis; L-valine from pyruvate: step 2/4. In terms of biological role, involved in the biosynthesis of branched-chain amino acids (BCAA). Catalyzes an alkyl-migration followed by a ketol-acid reduction of (S)-2-acetolactate (S2AL) to yield (R)-2,3-dihydroxy-isovalerate. In the isomerase reaction, S2AL is rearranged via a Mg-dependent methyl migration to produce 3-hydroxy-3-methyl-2-ketobutyrate (HMKB). In the reductase reaction, this 2-ketoacid undergoes a metal-dependent reduction by NADPH to yield (R)-2,3-dihydroxy-isovalerate. The sequence is that of Ketol-acid reductoisomerase (NADP(+)) from Acidobacterium capsulatum (strain ATCC 51196 / DSM 11244 / BCRC 80197 / JCM 7670 / NBRC 15755 / NCIMB 13165 / 161).